Consider the following 302-residue polypeptide: Succinate--CoA ligase [ADP-forming] subunit alpha (302 aa).

Residues 17 to 20 (TGST), Lys-43, and 96 to 98 (ITE) contribute to the CoA site. Residue Tyr-159 coordinates substrate. The Tele-phosphohistidine intermediate role is filled by His-247.

The protein belongs to the succinate/malate CoA ligase alpha subunit family. As to quaternary structure, heterotetramer of two alpha and two beta subunits.

It catalyses the reaction succinate + ATP + CoA = succinyl-CoA + ADP + phosphate. The catalysed reaction is GTP + succinate + CoA = succinyl-CoA + GDP + phosphate. It functions in the pathway carbohydrate metabolism; tricarboxylic acid cycle; succinate from succinyl-CoA (ligase route): step 1/1. In terms of biological role, succinyl-CoA synthetase functions in the citric acid cycle (TCA), coupling the hydrolysis of succinyl-CoA to the synthesis of either ATP or GTP and thus represents the only step of substrate-level phosphorylation in the TCA. The alpha subunit of the enzyme binds the substrates coenzyme A and phosphate, while succinate binding and nucleotide specificity is provided by the beta subunit. In Staphylococcus epidermidis (strain ATCC 35984 / DSM 28319 / BCRC 17069 / CCUG 31568 / BM 3577 / RP62A), this protein is Succinate--CoA ligase [ADP-forming] subunit alpha.